The chain runs to 322 residues: Corticotropin-releasing factor-binding protein (322 aa).

The first 24 residues, 1 to 24 (MSPNFKLQCHFILIFLTALRGESR), serve as a signal peptide directing secretion. Disulfide bonds link Cys-60/Cys-81, Cys-104/Cys-141, Cys-183/Cys-205, Cys-237/Cys-264, and Cys-277/Cys-318. Asn-204 carries N-linked (GlcNAc...) asparagine glycosylation.

It belongs to the CRF-binding protein family.

It is found in the secreted. In terms of biological role, binds CRF and inactivates it. May prevent inappropriate pituitary-adrenal stimulation in pregnancy. The chain is Corticotropin-releasing factor-binding protein (CRHBP) from Homo sapiens (Human).